A 474-amino-acid polypeptide reads, in one-letter code: tRNA-2-methylthio-N(6)-dimethylallyladenosine synthase (474 aa).

The 118-residue stretch at 3 to 120 folds into the MTTase N-terminal domain; sequence QKLHIKTWGC…LPEMINQIRG (118 aa). [4Fe-4S] cluster contacts are provided by Cys-12, Cys-49, Cys-83, Cys-157, Cys-161, and Cys-164. Positions 143 to 375 constitute a Radical SAM core domain; the sequence is RAEGPTAFVS…QQRINNQAAQ (233 aa). The TRAM domain maps to 378-441; sequence RAMLGTEQRV…TNSLRGEVVR (64 aa).

Belongs to the methylthiotransferase family. MiaB subfamily. In terms of assembly, monomer. The cofactor is [4Fe-4S] cluster.

The protein resides in the cytoplasm. The enzyme catalyses N(6)-dimethylallyladenosine(37) in tRNA + (sulfur carrier)-SH + AH2 + 2 S-adenosyl-L-methionine = 2-methylsulfanyl-N(6)-dimethylallyladenosine(37) in tRNA + (sulfur carrier)-H + 5'-deoxyadenosine + L-methionine + A + S-adenosyl-L-homocysteine + 2 H(+). Catalyzes the methylthiolation of N6-(dimethylallyl)adenosine (i(6)A), leading to the formation of 2-methylthio-N6-(dimethylallyl)adenosine (ms(2)i(6)A) at position 37 in tRNAs that read codons beginning with uridine. The protein is tRNA-2-methylthio-N(6)-dimethylallyladenosine synthase of Pasteurella multocida (strain Pm70).